Here is an 870-residue protein sequence, read N- to C-terminus: Adhesin AWP1 (870 aa).

A signal peptide spans 1-18 (MSLITIFAFFIKATLVLS). N224 carries N-linked (GlcNAc...) asparagine glycosylation. A disulfide bond links C284 and C322. The disordered stretch occupies residues 329–835 (ITPSSSVEPS…TRQTSVIAPG (507 aa)). Low complexity predominate over residues 331–566 (PSSSVEPSSS…SSSAVVPTSS (236 aa)). Residues 567-576 (AGGGNGGDNG) show a composition bias toward gly residues. Residues 577-641 (QPGADGQPGA…PGAAGQPGAA (65 aa)) show a composition bias toward low complexity. The segment covering 642-652 (GQPGAGSGGGS) has biased composition (gly residues). N669 carries N-linked (GlcNAc...) asparagine glycosylation. Positions 675–721 (SGTGNGQAGSGQAGSGQVGSGQAGAGQAGSGQAGAGQAGSGQAGAGQ) are enriched in gly residues. 2 stretches are compositionally biased toward polar residues: residues 724-735 (LDNTASGQSEGG) and 792-801 (GSGTDQSSGR).

It is found in the secreted. Its subcellular location is the cell wall. May play a role in cell adhesion. The polypeptide is Adhesin AWP1 (Candida glabrata (strain ATCC 2001 / BCRC 20586 / JCM 3761 / NBRC 0622 / NRRL Y-65 / CBS 138) (Yeast)).